Consider the following 318-residue polypeptide: Probable arabinan endo-1,5-alpha-L-arabinosidase C (318 aa).

Residues 1–28 (MLSFVLLLCVALVNAYSDPGACSGTCWA) form the signal peptide. D30 acts as the Proton acceptor in catalysis. N72, N80, and N188 each carry an N-linked (GlcNAc...) asparagine glycan. E196 acts as the Proton donor in catalysis. N277 carries an N-linked (GlcNAc...) asparagine glycan.

Belongs to the glycosyl hydrolase 43 family.

The protein resides in the secreted. The enzyme catalyses Endohydrolysis of (1-&gt;5)-alpha-arabinofuranosidic linkages in (1-&gt;5)-arabinans.. Its pathway is glycan metabolism; L-arabinan degradation. Its function is as follows. Endo-1,5-alpha-L-arabinanase involved in degradation of pectin. Its preferred substrate is linear 1,5-alpha-L-arabinan. This Aspergillus niger (strain ATCC MYA-4892 / CBS 513.88 / FGSC A1513) protein is Probable arabinan endo-1,5-alpha-L-arabinosidase C (abnC).